Consider the following 343-residue polypeptide: MEEMASRMISGDPELGEPFQENGLRPKYLKEFVGQKPLKANLTVFLHAAKQRAEAIDHILLHGPPGLGKTTMAQIIAWEMGVGLRSTSGPVIDKAGDLAALLTNLNPGDVLFVDEIHRLSPAVEEILYPAMEDFQLDLMIGEGPSARSVKIDLPRFTLVGATTRAGMLTSPLRDRFGILARMQFYEPDELQQIVTRSASIMGIDISADGAFEIARRSRGTPRIANRLLRRVRDFAQVAGPGYIDKDLADRALLALEVDRNGLDNMDHRLLKALLDKFAGGPVGLDTLAAAIGEERSTIEDVIEPYLILQGMLDRTPRGRKATHASYTAMGRTAPRPVQQGTLL.

The disordered stretch occupies residues 1-20 (MEEMASRMISGDPELGEPFQ). A large ATPase domain (RuvB-L) region spans residues 1-185 (MEEMASRMIS…FGILARMQFY (185 aa)). ATP contacts are provided by residues Leu-24, Arg-25, Gly-66, Lys-69, Thr-70, Thr-71, 132–134 (EDF), Arg-175, Tyr-185, and Arg-222. Mg(2+) is bound at residue Thr-70. A small ATPAse domain (RuvB-S) region spans residues 186–256 (EPDELQQIVT…LADRALLALE (71 aa)). The segment at 259 to 343 (RNGLDNMDHR…PRPVQQGTLL (85 aa)) is head domain (RuvB-H). DNA-binding residues include Arg-295, Arg-314, and Arg-319.

It belongs to the RuvB family. As to quaternary structure, homohexamer. Forms an RuvA(8)-RuvB(12)-Holliday junction (HJ) complex. HJ DNA is sandwiched between 2 RuvA tetramers; dsDNA enters through RuvA and exits via RuvB. An RuvB hexamer assembles on each DNA strand where it exits the tetramer. Each RuvB hexamer is contacted by two RuvA subunits (via domain III) on 2 adjacent RuvB subunits; this complex drives branch migration. In the full resolvosome a probable DNA-RuvA(4)-RuvB(12)-RuvC(2) complex forms which resolves the HJ.

Its subcellular location is the cytoplasm. It catalyses the reaction ATP + H2O = ADP + phosphate + H(+). Its function is as follows. The RuvA-RuvB-RuvC complex processes Holliday junction (HJ) DNA during genetic recombination and DNA repair, while the RuvA-RuvB complex plays an important role in the rescue of blocked DNA replication forks via replication fork reversal (RFR). RuvA specifically binds to HJ cruciform DNA, conferring on it an open structure. The RuvB hexamer acts as an ATP-dependent pump, pulling dsDNA into and through the RuvAB complex. RuvB forms 2 homohexamers on either side of HJ DNA bound by 1 or 2 RuvA tetramers; 4 subunits per hexamer contact DNA at a time. Coordinated motions by a converter formed by DNA-disengaged RuvB subunits stimulates ATP hydrolysis and nucleotide exchange. Immobilization of the converter enables RuvB to convert the ATP-contained energy into a lever motion, pulling 2 nucleotides of DNA out of the RuvA tetramer per ATP hydrolyzed, thus driving DNA branch migration. The RuvB motors rotate together with the DNA substrate, which together with the progressing nucleotide cycle form the mechanistic basis for DNA recombination by continuous HJ branch migration. Branch migration allows RuvC to scan DNA until it finds its consensus sequence, where it cleaves and resolves cruciform DNA. This chain is Holliday junction branch migration complex subunit RuvB, found in Magnetococcus marinus (strain ATCC BAA-1437 / JCM 17883 / MC-1).